Reading from the N-terminus, the 219-residue chain is Aspartic protease inhibitor 10 (219 aa).

The N-terminal stretch at methionine 1–threonine 23 is a signal peptide. A propeptide spanning residues serine 24 to serine 32 is cleaved from the precursor. The short motif at asparagine 26–proline 31 is the Vacuolar targeting signal element. Asparagine 51 carries N-linked (GlcNAc...) asparagine glycosylation. 2 cysteine pairs are disulfide-bonded: cysteine 80/cysteine 125 and cysteine 173/cysteine 184.

Belongs to the protease inhibitor I3 (leguminous Kunitz-type inhibitor) family. In terms of tissue distribution, in tubers and green buds of untreated plants. After abscisic acid treatment or mechanical wounding is mostly accumulated in leaves, to a lesser extent in stems, but not in roots.

Functionally, inhibitor of cathepsin D (aspartic protease) and trypsin (serine protease). Protects the plant by inhibiting proteases of invading organisms. This chain is Aspartic protease inhibitor 10 (CDI), found in Solanum tuberosum (Potato).